The primary structure comprises 92 residues: MSEANVNKKEKGARKVRTGYVVSDKMQKTIVVELEDRKSHAKYGKTIRTNSKVKAHDEKEIAGIGDLVRIEETRPLSKDKHFRLVEIVEKAK.

Belongs to the universal ribosomal protein uS17 family. As to quaternary structure, part of the 30S ribosomal subunit.

In terms of biological role, one of the primary rRNA binding proteins, it binds specifically to the 5'-end of 16S ribosomal RNA. The sequence is that of Small ribosomal subunit protein uS17 from Corynebacterium diphtheriae (strain ATCC 700971 / NCTC 13129 / Biotype gravis).